The primary structure comprises 581 residues: Transcription factor GTE2 (581 aa).

Residues 130–153 (VKKTKTKKKKIGHGQKRSNPFATD) form a disordered region. A compositionally biased stretch (basic residues) spans 131–145 (KKTKTKKKKIGHGQK). In terms of domain architecture, Bromo spans 169-275 (KVLKSMMTTC…SQFDVWFNPT (107 aa)). 2 disordered regions span residues 329 to 399 (PLLP…KREM) and 470 to 581 (KRQG…KEAP). Over residues 346-365 (PSPPPSPVQPPPPPSPPPQP) the composition is skewed to pro residues. Positions 389 to 470 (PKAKDPNKRE…NYRKMASKIK (82 aa)) constitute an NET domain. Basic and acidic residues-rich tracts occupy residues 390-399 (KAKDPNKREM) and 493-503 (SAEKRGRKGGE). Over residues 504-517 (AGEEDVDIGEDIPV) the composition is skewed to acidic residues. Low complexity predominate over residues 530–564 (TAAAASGGSSSSGSFSSSGSSSSSDSESGSSSGSD).

The protein localises to the nucleus. This Arabidopsis thaliana (Mouse-ear cress) protein is Transcription factor GTE2 (GTE2).